Consider the following 171-residue polypeptide: N5-carboxyaminoimidazole ribonucleotide mutase (171 aa).

Residues S13, D16, and R43 each coordinate substrate.

This sequence belongs to the AIR carboxylase family. Class I subfamily.

The enzyme catalyses 5-carboxyamino-1-(5-phospho-D-ribosyl)imidazole + H(+) = 5-amino-1-(5-phospho-D-ribosyl)imidazole-4-carboxylate. Its pathway is purine metabolism; IMP biosynthesis via de novo pathway; 5-amino-1-(5-phospho-D-ribosyl)imidazole-4-carboxylate from 5-amino-1-(5-phospho-D-ribosyl)imidazole (N5-CAIR route): step 2/2. Its function is as follows. Catalyzes the conversion of N5-carboxyaminoimidazole ribonucleotide (N5-CAIR) to 4-carboxy-5-aminoimidazole ribonucleotide (CAIR). The protein is N5-carboxyaminoimidazole ribonucleotide mutase of Mycobacterium leprae (strain TN).